A 262-amino-acid chain; its full sequence is MSERESWHKEIDLFLVAMGYFTRIPMPKWVEVDADKLNKASRYFGLVGLLVGLLSAIVFWLTQNWLPAGVSVLLSMVTGVLLTGGFHEDGLADTFDGFGGGWTAEDKLRIMKDSRLGSYGALALMLVLMLKWQLLVELALYDPVVAGSAMIVAHTVSRVVAASLIFTEKYVRDDESSKSKPLAQHQGINELFILIASGVLVLLVLKGIAALSLLLVMIGLRRLIVVIFRRQIGGYTGDTLGAAQQICEIVCYFVLLVVGSIL.

6 helical membrane passes run 43–63 (YFGLVGLLVGLLSAIVFWLTQ), 66–86 (LPAGVSVLLSMVTGVLLTGGF), 120–140 (GALALMLVLMLKWQLLVELAL), 146–166 (AGSAMIVAHTVSRVVAASLIF), 191–211 (LFILIASGVLVLLVLKGIAAL), and 242–262 (AAQQICEIVCYFVLLVVGSIL).

The protein belongs to the CobS family. The cofactor is Mg(2+).

The protein resides in the cell inner membrane. The enzyme catalyses alpha-ribazole + adenosylcob(III)inamide-GDP = adenosylcob(III)alamin + GMP + H(+). It catalyses the reaction alpha-ribazole 5'-phosphate + adenosylcob(III)inamide-GDP = adenosylcob(III)alamin 5'-phosphate + GMP + H(+). It participates in cofactor biosynthesis; adenosylcobalamin biosynthesis; adenosylcobalamin from cob(II)yrinate a,c-diamide: step 7/7. Its function is as follows. Joins adenosylcobinamide-GDP and alpha-ribazole to generate adenosylcobalamin (Ado-cobalamin). Also synthesizes adenosylcobalamin 5'-phosphate from adenosylcobinamide-GDP and alpha-ribazole 5'-phosphate. The sequence is that of Adenosylcobinamide-GDP ribazoletransferase from Shewanella sp. (strain ANA-3).